The chain runs to 435 residues: Acetyltransferase atnC (435 aa).

Transmembrane regions (helical) follow at residues 10–30, 40–60, and 68–88; these read AFANVALLFAVQILIPAFLII, YFGIPCIAFPAYLIFQLAPTL, and SFLACEGILVVAHCVNLLLIL. Asparagine 203 is a glycosylation site (N-linked (GlcNAc...) asparagine). The next 3 helical transmembrane spans lie at 306–326, 333–353, and 370–390; these read FLVFLLSGILHAVSANIMGLS, IPYFSSFALGMMLEDGVQAFY, and VVGFIWVVFWMSLTSPWYMFP. Asparagine 406 is a glycosylation site (N-linked (GlcNAc...) asparagine). A helical transmembrane segment spans residues 407 to 427; it reads LTEVIGMPMMWGLLGTFGMLV.

The protein belongs to the wax synthase family.

It localises to the membrane. It functions in the pathway secondary metabolite biosynthesis; terpenoid biosynthesis. Its function is as follows. Acetyltransferase; part of the gene cluster that mediates the biosynthesis of the meroterpenoids arthripenoids. The pathway begins with the HR-PKS atnH that catalyzes two chain-extension steps to form a reduced triketide, which then primes the SAT domain in the NR-PKS atnG to initiate three more cycles of extension to give a linear hexaketide corresponding to the polyketide part of arthripenoids. The FAD-dependent monooxygenase atnJ then performs an oxidative decarboxylation at C11 of the atnH/atnG product, via an electrophilic aromatic hydroxylation with concomitant ipso-decarboxylation. The membrane-bound polyprenyl transferase atnF then introduces a farnesyl group before the FAD-dependent monooxygenase atnK functions as the first epoxidase on terminal C12'-C13' olefin, followed by a second epoxidation on C7'-C8' catalyzed by atnA. The terpene cyclase/mutase atnI then initiates the sequential tricyclic ring formation through protonation of the terminal epoxide and catalyzes the regioselective and stereoselective 6/6/6-tricyclic ring formation. The cytochrome P450 monooxygenase atnM is responsible for hydroxylating both C1' and C10'. The next steps may involve ketoreduction and acetyl transfer by the ketoreductase atnB and the acetyltransferase atnC, and lead to the production of arthripenoid B, the final biosynthetic product of the atn cluster. The hydroquinone moiety in arthripenoid B is prone to undergo spontaneous oxidation to afford a benzoquinone compound, a key intermediate for generating structure diversity. For instance, addition of a cysteine followed by ring contraction gives arthripenoid A, tautomerization gives the main product arthripenoid C, addition of a molecular of water or amine affords arthripenoid D or E, respectively, and loss of one water forms arthripenoid F. The chain is Acetyltransferase atnC from Arthrinium sp.